Consider the following 328-residue polypeptide: Arabinose 5-phosphate isomerase KdsD (328 aa).

The region spanning 41–184 (ACEAIFRCHG…AVALLKARGF (144 aa)) is the SIS domain. Substrate is bound by residues 75–76 (GT), His82, His88, 114–123 (TLIPVLKRQK), and 148–150 (NVP). His82 provides a ligand contact to Zn(2+). A CBS 1 domain is found at 210 to 268 (MHTGTEIPTVSPDASLRDALLEITRKSLGLTVICDDSMRIKGIFTDGDLRRVFDMGIDL). A substrate-binding site is contributed by Asp275. Residues 277-328 (MTRGGIRVPPNILAVDALNLMESRHITALLVADGDQLLGVVHMHDMLRAGVV) enclose the CBS 2 domain.

This sequence belongs to the SIS family. GutQ/KpsF subfamily. Homotetramer.

It catalyses the reaction D-arabinose 5-phosphate = D-ribulose 5-phosphate. The protein operates within carbohydrate biosynthesis; 3-deoxy-D-manno-octulosonate biosynthesis; 3-deoxy-D-manno-octulosonate from D-ribulose 5-phosphate: step 1/3. It participates in bacterial outer membrane biogenesis; lipopolysaccharide biosynthesis. Involved in the biosynthesis of 3-deoxy-D-manno-octulosonate (KDO), a unique 8-carbon sugar component of lipopolysaccharides (LPSs). Catalyzes the reversible aldol-ketol isomerization between D-ribulose 5-phosphate (Ru5P) and D-arabinose 5-phosphate (A5P). The polypeptide is Arabinose 5-phosphate isomerase KdsD (kdsD) (Yersinia pestis).